Here is an 82-residue protein sequence, read N- to C-terminus: Penaeidin-3h (82 aa).

The signal sequence occupies residues 1-19; that stretch reads MRLVVCLVFLASFALVCQG. At glutamine 20 the chain carries Pyrrolidone carboxylic acid. 2 disulfide bridges follow: cysteine 55/cysteine 73 and cysteine 67/cysteine 74. Serine 81 carries the post-translational modification Serine amide.

The protein belongs to the penaeidin family.

The protein localises to the cytoplasmic granule. Antibacterial and antifungal activity. Presents chitin-binding activity. This is Penaeidin-3h from Penaeus vannamei (Whiteleg shrimp).